The sequence spans 174 residues: Small ribosomal subunit protein uS5 (174 aa).

The S5 DRBM domain maps to W18–I81.

This sequence belongs to the universal ribosomal protein uS5 family. As to quaternary structure, part of the 30S ribosomal subunit. Contacts proteins S4 and S8.

Its function is as follows. With S4 and S12 plays an important role in translational accuracy. Functionally, located at the back of the 30S subunit body where it stabilizes the conformation of the head with respect to the body. The polypeptide is Small ribosomal subunit protein uS5 (Trichormus variabilis (strain ATCC 29413 / PCC 7937) (Anabaena variabilis)).